The following is a 562-amino-acid chain: Formate--tetrahydrofolate ligase (562 aa).

Position 71 to 78 (71 to 78 (TPAGEGKS)) interacts with ATP.

Belongs to the formate--tetrahydrofolate ligase family.

The catalysed reaction is (6S)-5,6,7,8-tetrahydrofolate + formate + ATP = (6R)-10-formyltetrahydrofolate + ADP + phosphate. It functions in the pathway one-carbon metabolism; tetrahydrofolate interconversion. The protein is Formate--tetrahydrofolate ligase of Bacillus cereus (strain Q1).